Consider the following 470-residue polypeptide: Transcriptional activator PmfR (470 aa).

As to quaternary structure, forms oligomers in solution, probably homotetramers.

Its pathway is alkaloid degradation; nicotine degradation [regulation]. In terms of biological role, transcriptional regulator involved in the activation of the purU-mabO-folD-nepA-nepB and mao-ORF55-nbr operons implicated in the nicotine catabolic pathway. The sequence GTTT-14 bp-AAAC seems to be the core binding site of the regulator upstream of the -35 promoter region of the operon. This chain is Transcriptional activator PmfR (pmfR), found in Paenarthrobacter nicotinovorans (Arthrobacter nicotinovorans).